Consider the following 417-residue polypeptide: Serine hydroxymethyltransferase (417 aa).

Residues leucine 121 and glycine 125–leucine 127 contribute to the (6S)-5,6,7,8-tetrahydrofolate site. Lysine 229 is modified (N6-(pyridoxal phosphate)lysine). Serine 355–phenylalanine 357 contributes to the (6S)-5,6,7,8-tetrahydrofolate binding site.

It belongs to the SHMT family. Homodimer. It depends on pyridoxal 5'-phosphate as a cofactor.

The protein resides in the cytoplasm. It catalyses the reaction (6R)-5,10-methylene-5,6,7,8-tetrahydrofolate + glycine + H2O = (6S)-5,6,7,8-tetrahydrofolate + L-serine. The protein operates within one-carbon metabolism; tetrahydrofolate interconversion. It functions in the pathway amino-acid biosynthesis; glycine biosynthesis; glycine from L-serine: step 1/1. Functionally, catalyzes the reversible interconversion of serine and glycine with tetrahydrofolate (THF) serving as the one-carbon carrier. This reaction serves as the major source of one-carbon groups required for the biosynthesis of purines, thymidylate, methionine, and other important biomolecules. Also exhibits THF-independent aldolase activity toward beta-hydroxyamino acids, producing glycine and aldehydes, via a retro-aldol mechanism. This chain is Serine hydroxymethyltransferase, found in Shewanella frigidimarina (strain NCIMB 400).